The sequence spans 505 residues: Glycerol kinase (505 aa).

Threonine 14 provides a ligand contact to ADP. ATP contacts are provided by threonine 14, threonine 15, and serine 16. Position 14 (threonine 14) interacts with sn-glycerol 3-phosphate. Arginine 18 is a binding site for ADP. Arginine 84, glutamate 85, tyrosine 136, and aspartate 246 together coordinate sn-glycerol 3-phosphate. Residues arginine 84, glutamate 85, tyrosine 136, aspartate 246, and glutamine 247 each contribute to the glycerol site. ADP is bound by residues threonine 268 and glycine 311. The ATP site is built by threonine 268, glycine 311, glutamine 315, and glycine 412. Residues glycine 412 and asparagine 416 each coordinate ADP.

The protein belongs to the FGGY kinase family.

It catalyses the reaction glycerol + ATP = sn-glycerol 3-phosphate + ADP + H(+). The protein operates within polyol metabolism; glycerol degradation via glycerol kinase pathway; sn-glycerol 3-phosphate from glycerol: step 1/1. With respect to regulation, inhibited by fructose 1,6-bisphosphate (FBP). Its function is as follows. Key enzyme in the regulation of glycerol uptake and metabolism. Catalyzes the phosphorylation of glycerol to yield sn-glycerol 3-phosphate. The sequence is that of Glycerol kinase from Vibrio parahaemolyticus serotype O3:K6 (strain RIMD 2210633).